The following is a 679-amino-acid chain: Glycine--tRNA ligase beta subunit (679 aa).

It belongs to the class-II aminoacyl-tRNA synthetase family. Tetramer of two alpha and two beta subunits.

The protein resides in the cytoplasm. The enzyme catalyses tRNA(Gly) + glycine + ATP = glycyl-tRNA(Gly) + AMP + diphosphate. The protein is Glycine--tRNA ligase beta subunit of Streptococcus pyogenes serotype M6 (strain ATCC BAA-946 / MGAS10394).